The following is a 943-amino-acid chain: UvrABC system protein A (943 aa).

An ATP-binding site is contributed by 31 to 38 (GLSGSGKS). The C4-type zinc-finger motif lies at 253-280 (CPHCGYSVPELEPRLFSFNNPAGACPTC). ABC transporter domains lie at 310–587 (WDRR…PHSI) and 607–937 (LDKK…RFLK). 640–647 (GVSGSGKS) is a binding site for ATP. Residues 740–766 (CEACQGDGVIKVEMHFLPDVYVPCEQC) form a C4-type zinc finger.

The protein belongs to the ABC transporter superfamily. UvrA family. As to quaternary structure, forms a heterotetramer with UvrB during the search for lesions.

It is found in the cytoplasm. Its function is as follows. The UvrABC repair system catalyzes the recognition and processing of DNA lesions. UvrA is an ATPase and a DNA-binding protein. A damage recognition complex composed of 2 UvrA and 2 UvrB subunits scans DNA for abnormalities. When the presence of a lesion has been verified by UvrB, the UvrA molecules dissociate. The polypeptide is UvrABC system protein A (Pasteurella multocida (strain Pm70)).